Consider the following 527-residue polypeptide: MNLTLKESLVTRSRVFSPWTAFYFLQSLLINLGLGYPFSLLYTAAFTAILLLLWRTLPRVQKVLVGVSSLVAACYFPFAQAYGAPNFNTLLALHSTNMEESTEILTIFPWYSYLVGLFIFALGVIAIRRKKENEKARWNTFDSLCLVFSVATFFVAPVQNLAWGGVFKLKDTGYPVFRFAKDVIVNNNEVIEEQERMAKLSGMKDTWTVTAVKPKYQTYVVVIGESARRDALGAFGGHWDNTPFASSVNGLIFADYIAASGSTQKSLGLTLNRVVDGKPQFQDNFVTLANRAGFQTWWFSNQGQIGEYDTAIASIAKRADEVYFLKEGNFEADKNTKDEALLDMTAQVLAQEHSQPQLIVLHLMGSHPQACDRTQGKYETFVQSKETSCYLYTMTQTDDLLRKLYDQLRNSGSSFSLVYFSDHGLAFKERGKDVQYLAHDDKYQQNFQVPFMVISSDDKAHRVIKARRSANDFLGFFSQWTGIKAKEINIKYPFISEKKAGPIYITNFQLQKVDYNHLGTDIFDPKP.

Over 1–33 (MNLTLKESLVTRSRVFSPWTAFYFLQSLLINLG) the chain is Periplasmic. The chain crosses the membrane as a helical span at residues 34 to 54 (LGYPFSLLYTAAFTAILLLLW). Over 55–62 (RTLPRVQK) the chain is Cytoplasmic. A helical membrane pass occupies residues 63–83 (VLVGVSSLVAACYFPFAQAYG). At 84–106 (APNFNTLLALHSTNMEESTEILT) the chain is on the periplasmic side. Residues 107–127 (IFPWYSYLVGLFIFALGVIAI) traverse the membrane as a helical segment. At 128–146 (RRKKENEKARWNTFDSLCL) the chain is on the cytoplasmic side. The helical transmembrane segment at 147-167 (VFSVATFFVAPVQNLAWGGVF) threads the bilayer. The Periplasmic segment spans residues 168–527 (KLKDTGYPVF…LGTDIFDPKP (360 aa)).

This sequence belongs to the phosphoethanolamine transferase family.

It is found in the cell inner membrane. The protein operates within glycan metabolism; osmoregulated periplasmic glucan (OPG) biosynthesis. Its function is as follows. Catalyzes the addition of a phosphoethanolamine moiety to the osmoregulated periplasmic glucan (OPG) backbone. In Escherichia coli (strain K12), this protein is Phosphoethanolamine transferase OpgE (opgE).